A 903-amino-acid polypeptide reads, in one-letter code: Protein translocase subunit SecA (903 aa).

Residues Gln85, 103 to 107 (GEGKT), and Asp492 each bind ATP. A disordered region spans residues 863 to 890 (GDGVKQPVRRDKKVGRNSPCPCGSGKKY). 4 residues coordinate Zn(2+): Cys882, Cys884, Cys893, and Cys894.

The protein belongs to the SecA family. Monomer and homodimer. Part of the essential Sec protein translocation apparatus which comprises SecA, SecYEG and auxiliary proteins SecDF. Other proteins may also be involved. It depends on Zn(2+) as a cofactor.

The protein resides in the cell membrane. It is found in the cytoplasm. The enzyme catalyses ATP + H2O + cellular proteinSide 1 = ADP + phosphate + cellular proteinSide 2.. In terms of biological role, part of the Sec protein translocase complex. Interacts with the SecYEG preprotein conducting channel. Has a central role in coupling the hydrolysis of ATP to the transfer of proteins into and across the cell membrane, serving as an ATP-driven molecular motor driving the stepwise translocation of polypeptide chains across the membrane. This Desulforudis audaxviator (strain MP104C) protein is Protein translocase subunit SecA.